The primary structure comprises 450 residues: Tubulin alpha chain (450 aa).

The short motif at 1 to 4 (MREC) is the MREC motif element. Residue Q11 coordinates GTP. The residue at position 40 (K40) is an N6-acetyllysine. Positions 71, 140, 144, 145, 179, 206, and 228 each coordinate GTP. Residue E71 participates in Mg(2+) binding. E254 is an active-site residue. E444 carries the post-translational modification 5-glutamyl polyglutamate.

Belongs to the tubulin family. Dimer of alpha and beta chains. A typical microtubule is a hollow water-filled tube with an outer diameter of 25 nm and an inner diameter of 15 nM. Alpha-beta heterodimers associate head-to-tail to form protofilaments running lengthwise along the microtubule wall with the beta-tubulin subunit facing the microtubule plus end conferring a structural polarity. Microtubules usually have 13 protofilaments but different protofilament numbers can be found in some organisms and specialized cells. It depends on Mg(2+) as a cofactor. In terms of processing, some glutamate residues at the C-terminus are polyglycylated, resulting in polyglycine chains on the gamma-carboxyl group. Glycylation is mainly limited to tubulin incorporated into axonemes (cilia and flagella) whereas glutamylation is prevalent in neuronal cells, centrioles, axonemes, and the mitotic spindle. Both modifications can coexist on the same protein on adjacent residues, and lowering polyglycylation levels increases polyglutamylation, and reciprocally. The precise function of polyglycylation is still unclear. Post-translationally, some glutamate residues at the C-terminus are polyglutamylated, resulting in polyglutamate chains on the gamma-carboxyl group. Polyglutamylation plays a key role in microtubule severing by spastin (SPAST). SPAST preferentially recognizes and acts on microtubules decorated with short polyglutamate tails: severing activity by SPAST increases as the number of glutamates per tubulin rises from one to eight, but decreases beyond this glutamylation threshold. Acetylation of alpha chains at Lys-40 is located inside the microtubule lumen. This modification has been correlated with increased microtubule stability, intracellular transport and ciliary assembly. In terms of processing, undergoes a tyrosination/detyrosination cycle, the cyclic removal and re-addition of a C-terminal tyrosine residue by the enzymes tubulin tyrosine carboxypeptidase (MATCAP, VASH1 or VASH2) and tubulin tyrosine ligase (TTL), respectively. Post-translationally, tyrosination promotes microtubule interaction with CAP-Gly microtubule plus-end tracking proteins. Tyrosinated tubulins regulate the initiation of dynein-driven motility. Detyrosination is involved in metaphase plate congression by guiding chromosomes during mitosis. Detyrosination increases microtubules-dependent mechanotransduction in dystrophic cardiac and skeletal muscle. In cardiomyocytes, detyrosinated microtubules are required to resist to contractile compression during contraction.

Its subcellular location is the cytoplasm. It localises to the cytoskeleton. The catalysed reaction is GTP + H2O = GDP + phosphate + H(+). Its function is as follows. Tubulin is the major constituent of microtubules, a cylinder consisting of laterally associated linear protofilaments composed of alpha- and beta-tubulin heterodimers. Microtubules grow by the addition of GTP-tubulin dimers to the microtubule end, where a stabilizing cap forms. Below the cap, tubulin dimers are in GDP-bound state, owing to GTPase activity of alpha-tubulin. This chain is Tubulin alpha chain, found in Notophthalmus viridescens (Eastern newt).